The chain runs to 934 residues: Translation initiation factor IF-2 (934 aa).

The disordered stretch occupies residues 54–323; it reads AQESKPTTPP…KRQKRNEYEA (270 aa). 4 stretches are compositionally biased toward low complexity: residues 80 to 154, 185 to 197, 206 to 231, and 238 to 250; these read PKPG…AGKP, RGGA…PRPG, GQAP…PGAA, and RPSP…TPSP. Positions 260–303 are enriched in gly residues; sequence GFGGGRGRGGRPGGPGGPGGPGGPGPRGGRGGRRGGTAGAFGRP. Residues 308–317 are compositionally biased toward basic residues; that stretch reads RRGRKSKRQK. Residues 430-602 enclose the tr-type G domain; sequence QRPPVVTVMG…VLLTADASLD (173 aa). Residues 439 to 446 form a G1 region; it reads GHVDHGKT. 439-446 contributes to the GTP binding site; sequence GHVDHGKT. The segment at 464–468 is G2; it reads GITQH. The segment at 489–492 is G3; that stretch reads DTPG. Residues 489–493 and 543–546 contribute to the GTP site; these read DTPGH and NKID. A G4 region spans residues 543 to 546; the sequence is NKID. Positions 579 to 581 are G5; it reads SAK.

Belongs to the TRAFAC class translation factor GTPase superfamily. Classic translation factor GTPase family. IF-2 subfamily.

The protein resides in the cytoplasm. Functionally, one of the essential components for the initiation of protein synthesis. Protects formylmethionyl-tRNA from spontaneous hydrolysis and promotes its binding to the 30S ribosomal subunits. Also involved in the hydrolysis of GTP during the formation of the 70S ribosomal complex. The sequence is that of Translation initiation factor IF-2 from Corynebacterium urealyticum (strain ATCC 43042 / DSM 7109).